Reading from the N-terminus, the 282-residue chain is Sulfur carrier protein FdhD (282 aa).

Cys115 functions as the Cysteine persulfide intermediate in the catalytic mechanism.

This sequence belongs to the FdhD family.

It localises to the cytoplasm. Required for formate dehydrogenase (FDH) activity. Acts as a sulfur carrier protein that transfers sulfur from IscS to the molybdenum cofactor prior to its insertion into FDH. This Streptomyces avermitilis (strain ATCC 31267 / DSM 46492 / JCM 5070 / NBRC 14893 / NCIMB 12804 / NRRL 8165 / MA-4680) protein is Sulfur carrier protein FdhD.